The primary structure comprises 232 residues: Lipoprotein-releasing system ATP-binding protein LolD (232 aa).

The ABC transporter domain maps to 11–231 (VYLHDIKREY…SLENGHVVEL (221 aa)). 47 to 54 (APSGSGKS) lines the ATP pocket.

It belongs to the ABC transporter superfamily. Lipoprotein translocase (TC 3.A.1.125) family. In terms of assembly, the complex is composed of two ATP-binding proteins (LolD) and two transmembrane proteins (LolC and LolE).

Its subcellular location is the cell inner membrane. Its function is as follows. Part of the ABC transporter complex LolCDE involved in the translocation of mature outer membrane-directed lipoproteins, from the inner membrane to the periplasmic chaperone, LolA. Responsible for the formation of the LolA-lipoprotein complex in an ATP-dependent manner. This is Lipoprotein-releasing system ATP-binding protein LolD from Nitrobacter winogradskyi (strain ATCC 25391 / DSM 10237 / CIP 104748 / NCIMB 11846 / Nb-255).